The following is a 208-amino-acid chain: Flavin-dependent thymidylate synthase (208 aa).

Residues 1 to 208 form the ThyX domain; that stretch reads MEVICKHYTP…QYLFEDCLKH (208 aa). FAD-binding positions include Ser50 and 74-76; that span reads RHR. DUMP is bound by residues 71 to 74, 84 to 86, and Lys147; these read ELSR and SSR. Positions 74–84 match the ThyX motif motif; it reads RHRIASLSVKS. FAD is bound by residues 163–165 and Asn169; that span reads NAR. Arg174 serves as a coordination point for dUMP. Arg174 serves as the catalytic Involved in ionization of N3 of dUMP, leading to its activation.

It belongs to the thymidylate synthase ThyX family. Homotetramer. FAD is required as a cofactor.

The catalysed reaction is dUMP + (6R)-5,10-methylene-5,6,7,8-tetrahydrofolate + NADPH + H(+) = dTMP + (6S)-5,6,7,8-tetrahydrofolate + NADP(+). Its pathway is pyrimidine metabolism; dTTP biosynthesis. In terms of biological role, catalyzes the reductive methylation of 2'-deoxyuridine-5'-monophosphate (dUMP) to 2'-deoxythymidine-5'-monophosphate (dTMP) while utilizing 5,10-methylenetetrahydrofolate (mTHF) as the methyl donor, and NAD(P)H and FADH(2) as the reductant. This is Flavin-dependent thymidylate synthase from Helicobacter pylori (strain ATCC 700392 / 26695) (Campylobacter pylori).